Here is a 472-residue protein sequence, read N- to C-terminus: Uronate isomerase (472 aa).

It belongs to the metallo-dependent hydrolases superfamily. Uronate isomerase family.

The enzyme catalyses D-glucuronate = D-fructuronate. The catalysed reaction is aldehydo-D-galacturonate = keto-D-tagaturonate. The protein operates within carbohydrate metabolism; pentose and glucuronate interconversion. The protein is Uronate isomerase of Xanthomonas oryzae pv. oryzae (strain MAFF 311018).